We begin with the raw amino-acid sequence, 525 residues long: GMP synthase [glutamine-hydrolyzing] (525 aa).

In terms of domain architecture, Glutamine amidotransferase type-1 spans Lys-8–Asn-207. Catalysis depends on Cys-85, which acts as the Nucleophile. Catalysis depends on residues His-181 and Glu-183. The region spanning Trp-208–Arg-400 is the GMPS ATP-PPase domain. ATP is bound at residue Ser-235–Ser-241.

In terms of assembly, homodimer.

It catalyses the reaction XMP + L-glutamine + ATP + H2O = GMP + L-glutamate + AMP + diphosphate + 2 H(+). Its pathway is purine metabolism; GMP biosynthesis; GMP from XMP (L-Gln route): step 1/1. In terms of biological role, catalyzes the synthesis of GMP from XMP. The polypeptide is GMP synthase [glutamine-hydrolyzing] (Shewanella putrefaciens (strain CN-32 / ATCC BAA-453)).